The sequence spans 86 residues: Gas vesicle protein A1 (86 aa).

The protein belongs to the gas vesicle GvpA family. The gas vesicle shell is 2 nm thick and consists of a single layer of this protein. It forms helical ribs nearly perpendicular to the long axis of the vesicle.

It localises to the gas vesicle shell. Its function is as follows. Gas vesicles are hollow, gas filled proteinaceous nanostructures found in some microorganisms. During planktonic growth they allow positioning of the organism at a favorable depth for light or nutrient acquisition. GvpA forms the protein shell. It is not clear if the 2 type A proteins in this organism are functionally redundant. In terms of biological role, when the full gvp locus (gvpA1-gvpP-gvpQ-gvpA2-gvpR-gvpN-gvpF-gvpG-gvpL-gvpS-gvpK-gvpJ-gvpT-gvpU, called pNL26) is expressed in E.coli gas vesicles are made. The chain is Gas vesicle protein A1 from Priestia megaterium (Bacillus megaterium).